Consider the following 5202-residue polypeptide: Usherin (5202 aa).

Residues 1–31 form the signal peptide; sequence MNCPVLSLGSGFLFQVIEMLIFAYFASISLT. At 32 to 5042 the chain is on the extracellular side; the sequence is ESRGLFPRLE…KSTEFYSELW (5011 aa). In terms of domain architecture, Laminin N-terminal spans 271 to 517; that stretch reads QDFRLYQVAL…AVDEITISGR (247 aa). Residues Asn-361 and Asn-451 are each glycosylated (N-linked (GlcNAc...) asparagine). Cystine bridges form between Cys-518–Cys-527, Cys-520–Cys-536, Cys-538–Cys-549, Cys-552–Cys-572, Cys-575–Cys-584, Cys-577–Cys-605, Cys-608–Cys-617, Cys-620–Cys-638, Cys-641–Cys-655, Cys-643–Cys-662, Cys-664–Cys-673, Cys-676–Cys-691, Cys-694–Cys-708, Cys-696–Cys-715, Cys-717–Cys-726, Cys-729–Cys-744, Cys-747–Cys-759, Cys-749–Cys-766, Cys-768–Cys-777, Cys-780–Cys-792, Cys-795–Cys-808, Cys-797–Cys-815, Cys-817–Cys-826, Cys-829–Cys-844, Cys-847–Cys-861, Cys-849–Cys-868, Cys-870–Cys-879, Cys-882–Cys-897, Cys-900–Cys-913, Cys-902–Cys-920, Cys-922–Cys-931, Cys-934–Cys-948, Cys-951–Cys-963, Cys-953–Cys-970, Cys-972–Cys-982, Cys-985–Cys-999, Cys-1002–Cys-1014, Cys-1004–Cys-1021, Cys-1023–Cys-1032, and Cys-1035–Cys-1050. Laminin EGF-like domains lie at 518 to 574, 575 to 640, 641 to 693, 694 to 746, 747 to 794, 795 to 846, 847 to 899, 900 to 950, 951 to 1001, and 1002 to 1052; these read CQCH…NCKP, CQCN…VCKP, CDCD…GCSP, CNCN…GCEP, CQCN…NCKA, CDCD…LCLP, CNCD…HCQM, CECD…GCLP, CSCH…RCQP, and CNCH…GCSK. N-linked (GlcNAc...) asparagine glycosylation is found at Asn-587 and Asn-611. Asn-650 carries N-linked (GlcNAc...) asparagine glycosylation. N-linked (GlcNAc...) asparagine glycosylation occurs at Asn-697. Residues Asn-839, Asn-856, and Asn-862 are each glycosylated (N-linked (GlcNAc...) asparagine). N-linked (GlcNAc...) asparagine glycosylation occurs at Asn-888. An N-linked (GlcNAc...) asparagine glycan is attached at Asn-944. Asn-1011 is a glycosylation site (N-linked (GlcNAc...) asparagine). Fibronectin type-III domains lie at 1058 to 1146, 1148 to 1244, 1245 to 1363, and 1364 to 1468; these read PPPR…TKPG, PEGN…APPQ, RLSP…SAPV, and FMIP…AAPA. N-linked (GlcNAc...) asparagine glycosylation is found at Asn-1071, Asn-1151, and Asn-1174. N-linked (GlcNAc...) asparagine glycans are attached at residues Asn-1379, Asn-1388, Asn-1479, and Asn-1635. 2 consecutive Laminin G-like domains span residues 1517 to 1709 and 1714 to 1891; these read MKGI…WEGC and NEGA…LDGC. The cysteines at positions 1672 and 1709 are disulfide-linked. A glycan (N-linked (GlcNAc...) asparagine) is linked at Asn-1779. Cys-1862 and Cys-1891 are oxidised to a cystine. Fibronectin type-III domains are found at residues 1869-1955, 1957-2054, 2055-2144, 2145-2239, 2243-2330, 2331-2433, 2437-2531, 2535-2622, 2624-2722, 2726-2819, 2820-2923, 2927-3018, 3022-3112, and 3113-3209; these read TRGA…AAPQ, VPTP…TPQE, APQE…LPPE, HVDS…TDED, GVPA…APPE, GTVN…MPPG, GVLP…TAED, PVVP…TLPG, PEGI…TRPS, GVQP…THPT, VPQN…TLAG, RGAN…TCDG, GMLP…TPSD, and IPTP…CCEE. 14 N-linked (GlcNAc...) asparagine glycosylation sites follow: Asn-1903, Asn-2011, Asn-2014, Asn-2048, Asn-2130, Asn-2182, Asn-2195, Asn-2258, Asn-2285, Asn-2322, Asn-2377, Asn-2382, Asn-2407, and Asn-2413. Residues Asn-2581, Asn-2584, Asn-2656, Asn-2710, Asn-2770, and Asn-2788 are each glycosylated (N-linked (GlcNAc...) asparagine). N-linked (GlcNAc...) asparagine glycosylation is found at Asn-2930, Asn-2937, Asn-2970, Asn-3032, and Asn-3099. N-linked (GlcNAc...) asparagine glycans are attached at residues Asn-3217, Asn-3330, Asn-3419, and Asn-3433. Cystine bridges form between Cys-3371–Cys-3444 and Cys-3399–Cys-3425. Fibronectin type-III domains lie at 3403–3497, 3501–3589, 3592–3682, 3684–3770, 3774–3865, 3866–3963, 3964–4067, 4068–4153, 4157–4261, 4262–4357, 4358–4445, 4446–4530, 4534–4630, 4636–4733, 4734–4827, and 4828–4927; these read CPAS…TKED, GVSP…TQGV, SILP…AAPE, VWVT…TPMS, EIYP…TPEA, APMD…TLEA, PPQD…SSPS, GLRN…TDEA, SQLA…TLQA, PPEG…AAPS, EVSP…ALPE, NMDS…TSPS, GMEP…TPEI, PPPH…TGPA, PPEG…THPA, and PPSG…SFTT. N-linked (GlcNAc...) asparagine glycans are attached at residues Asn-3653, Asn-3694, Asn-3733, Asn-3780, and Asn-3849. Asn-3984 carries N-linked (GlcNAc...) asparagine glycosylation. N-linked (GlcNAc...) asparagine glycosylation is found at Asn-4202, Asn-4226, Asn-4317, and Asn-4418. Positions 4518–4541 are disordered; sequence ILSPLVKDRTSPSAPSGMEPPKLQ. N-linked (GlcNAc...) asparagine glycans are attached at residues Asn-4564, Asn-4583, Asn-4691, Asn-4754, and Asn-4800. N-linked (GlcNAc...) asparagine glycosylation is found at Asn-4943 and Asn-4950. Residues 5043–5063 form a helical membrane-spanning segment; the sequence is FIVLMAMLGLILLAIFLSLIL. Over 5064-5202 the chain is Cytoplasmic; sequence QRKIHKEPYI…ERTTFTDTHL (139 aa). The PDZ-binding signature appears at 5200–5202; the sequence is THL.

As to quaternary structure, interacts with collagen IV and fibronectin via its laminin EGF-like domains. Interaction with collagen may be required for stable integration into the basement membrane. Interacts with NINL. Interacts with USH1C. Component of USH2 complex, composed of ADGRV1, PDZD7, USH2A and WHRN. Interacts with ADGRV1/MASS1 (via N-terminal PDZ domain). Interacts (via the cytoplasmic region) with WHRN. Interacts (via the cytoplasmic region) with PDZD7. Interacts (via the cytoplasmic region) with VEZT and MYO7A (via MyTH4-FERM domains); the interaction associates VEZT with the USH2 complex at the stereocilia base. As to expression, present in the basement membrane of many, but not all tissues. Expressed in retina, cochlea, small and large intestine, pancreas, bladder, prostate, esophagus, trachea, thymus, salivary glands, placenta, ovary, fallopian tube, uterus and testis. Absent in many other tissues such as heart, lung, liver, kidney and brain. In the retina, it is present in the basement membranes in the Bruch's layer choroid capillary basement membranes, where it localizes just beneath the retinal pigment epithelial cells (at protein level). Weakly expressed. Isoform 2 is expressed in fetal eye, cochlea and heart, and at very low level in brain, CNS, intestine, skeleton, tongue, kidney and lung. Isoform 2 is not expressed in stomach and liver. In adult tissues, isoform 2 is expressed in neural retina and testis, and at low level in brain, heart, kidney and liver. Isoform 1 displays a similar pattern of expression but is expressed at very low level in fetal cochlea.

Its subcellular location is the cell projection. The protein resides in the stereocilium membrane. The protein localises to the secreted. Functionally, involved in hearing and vision as member of the USH2 complex. In the inner ear, required for the maintenance of the hair bundle ankle formation, which connects growing stereocilia in developing cochlear hair cells. In retina photoreceptors, the USH2 complex is required for the maintenance of periciliary membrane complex that seems to play a role in regulating intracellular protein transport. The chain is Usherin (USH2A) from Homo sapiens (Human).